Reading from the N-terminus, the 148-residue chain is Urease accessory protein UreE (148 aa).

This sequence belongs to the UreE family.

The protein resides in the cytoplasm. In terms of biological role, involved in urease metallocenter assembly. Binds nickel. Probably functions as a nickel donor during metallocenter assembly. The chain is Urease accessory protein UreE from Lysinibacillus sphaericus (strain C3-41).